The primary structure comprises 401 residues: ATP phosphoribosyltransferase regulatory subunit (401 aa).

The tract at residues P373–L401 is disordered. Gly residues predominate over residues D392–L401.

It belongs to the class-II aminoacyl-tRNA synthetase family. HisZ subfamily. In terms of assembly, heteromultimer composed of HisG and HisZ subunits.

It localises to the cytoplasm. It functions in the pathway amino-acid biosynthesis; L-histidine biosynthesis; L-histidine from 5-phospho-alpha-D-ribose 1-diphosphate: step 1/9. In terms of biological role, required for the first step of histidine biosynthesis. May allow the feedback regulation of ATP phosphoribosyltransferase activity by histidine. The protein is ATP phosphoribosyltransferase regulatory subunit of Alkalilimnicola ehrlichii (strain ATCC BAA-1101 / DSM 17681 / MLHE-1).